The sequence spans 100 residues: Large ribosomal subunit protein uL23 (100 aa).

This sequence belongs to the universal ribosomal protein uL23 family. In terms of assembly, part of the 50S ribosomal subunit. Contacts protein L29, and trigger factor when it is bound to the ribosome.

In terms of biological role, one of the early assembly proteins it binds 23S rRNA. One of the proteins that surrounds the polypeptide exit tunnel on the outside of the ribosome. Forms the main docking site for trigger factor binding to the ribosome. This is Large ribosomal subunit protein uL23 from Synechococcus sp. (strain RCC307).